Reading from the N-terminus, the 21-residue chain is Conchiolin protein p20 (21 aa).

Residues 1 to 14 (YQRXSRYYYYXGPP) are compositionally biased toward low complexity. Residues 1–21 (YQRXSRYYYYXGPPDDIDDRY) are disordered.

It belongs to the N16 matrix protein family. As to quaternary structure, homooligomer; disulfide-linked. May also be disulfide-linked to insoluble organic matrix. Post-translationally, according to PubMed:11250534, amino acids 4 and 11 may be sulfated or phosphorylated. By similarity with the N14 matrix protein, amino-acid 4 may be a cysteine involved in a disulfide bond. In terms of tissue distribution, component of conchiolin, the organic matrix of nacre. Is dispersed in calcium carbonate and also linked by disulfide bonds to the organic core of nacre.

It is found in the secreted. Its subcellular location is the extracellular space. The protein resides in the extracellular matrix. May be specifically involved in the formation of the nacreous layer. This chain is Conchiolin protein p20, found in Pinctada maxima (Silver-lipped pearl oyster).